Here is a 372-residue protein sequence, read N- to C-terminus: MIVDLPLRRIQQFARLGAKHQSSVLIRLHTKGGIVGIGESITPCGPWWSGDSVEAIQATINHYLAPLVVGEPALDASRIMAKLHGRVAGNAFAKAGIEMALLDAVGKIVDAPIHVLLGGRFRDRLSVAWPLATGDVNQEVDEAFRMLEAGKAGAFKLKMGALPLAQDLRRALAIAKELEGKASLRVDPNEAWDEPTTMRALAPLEAAGVEIIEQPVARWNLDAMARIHRQARSMLLIDEGVQSLHDASEVVKRAAAGLVSLKIMKTGGMRPARAMADIANAGGMHVYMGTFLETSIGTAANMQLAASIESLPYGGEVIGPLLIEEDLCEVPAVYKEHALWLPEGPGLGIRLDENQVRRFARASSQRIDRHSA.

Catalysis depends on Lys-158, which acts as the Proton acceptor. Asp-187, Glu-213, and Asp-238 together coordinate Mn(2+). The active-site Proton donor is Glu-316.

It belongs to the mandelate racemase/muconate lactonizing enzyme family. Mn(2+) serves as cofactor.

The enzyme catalyses 2-[(2R)-2-chloro-2,5-dihydro-5-oxofuryl]acetate = 3-chloro-cis,cis-muconate + H(+). It participates in aromatic compound metabolism; 3-chlorocatechol degradation. The protein is Chloromuconate cycloisomerase (tfdDII) of Cupriavidus pinatubonensis (strain JMP 134 / LMG 1197) (Cupriavidus necator (strain JMP 134)).